Consider the following 185-residue polypeptide: Probable chorismate pyruvate-lyase (185 aa).

Residues Arg-84, Leu-122, and Glu-178 each coordinate substrate.

It belongs to the UbiC family.

It localises to the cytoplasm. It catalyses the reaction chorismate = 4-hydroxybenzoate + pyruvate. The protein operates within cofactor biosynthesis; ubiquinone biosynthesis. In terms of biological role, removes the pyruvyl group from chorismate, with concomitant aromatization of the ring, to provide 4-hydroxybenzoate (4HB) for the ubiquinone pathway. The polypeptide is Probable chorismate pyruvate-lyase (Hydrogenovibrio crunogenus (strain DSM 25203 / XCL-2) (Thiomicrospira crunogena)).